A 1004-amino-acid polypeptide reads, in one-letter code: Kinesin-like protein KIN-7I (1004 aa).

Residues 6–326 (KILVSVRVRP…LLFATCAKEV (321 aa)) form the Kinesin motor domain. Residue 89–96 (GQTSSGKT) coordinates ATP. 3 coiled-coil regions span residues 335–402 (VVSE…AQSR), 517–576 (KKEY…QKQS), and 634–661 (SVEK…DQSE). Disordered stretches follow at residues 567-599 (EQSV…KSLP), 628-671 (SQQT…PEDE), and 802-830 (TMQH…GEKT). Basic and acidic residues-rich tracts occupy residues 569–582 (SVEK…KEEM) and 634–652 (SVEK…EDLK). The segment covering 653 to 663 (QNLSMDQSEQL) has biased composition (polar residues). K881 participates in a covalent cross-link: Glycyl lysine isopeptide (Lys-Gly) (interchain with G-Cter in ubiquitin).

Belongs to the TRAFAC class myosin-kinesin ATPase superfamily. Kinesin family. KIN-7 subfamily.

The sequence is that of Kinesin-like protein KIN-7I from Arabidopsis thaliana (Mouse-ear cress).